The following is a 451-amino-acid chain: D(1A) dopamine receptor (451 aa).

At 1–22 (MTFNITSMDEDVLLTERESSFR) the chain is on the extracellular side. Asparagine 4 carries N-linked (GlcNAc...) asparagine glycosylation. A helical transmembrane segment spans residues 23-48 (VLTGCFLSVLILSTLLGNTLVCAAVI). Over 49–59 (RFRHLRSKVTN) the chain is Cytoplasmic. A helical transmembrane segment spans residues 60–86 (FFVISLAVSDLLVAVLVMPWKAVAEIA). The Extracellular segment spans residues 87 to 95 (GFWPFGTFC). Cysteine 95 and cysteine 185 form a disulfide bridge. Residues 96–118 (NIWVAFDIMCSTASILNLCVISV) traverse the membrane as a helical segment. Residues 119-137 (DRYWAISSPFRYERKMTPK) lie on the Cytoplasmic side of the membrane. The helical transmembrane segment at 138–162 (VAFIMIGVAWTLSVLISFIPVQLNW) threads the bilayer. Over 163-191 (HKAKTTSFFDLNITLHDRTMDNCDSSLNR) the chain is Extracellular. The helical transmembrane segment at 192–217 (TYAISSSLISFYIPVAIMIVTYTRIY) threads the bilayer. Topologically, residues 218–271 (RIAAKQIRRISALERAAVHAKNCQNSTSNRNSLDCQQPESSLKTSFKRETKVLK) are cytoplasmic. A helical transmembrane segment spans residues 272-298 (TLSVIMGVFVCCWLPFFILNCIVPFCD). The Extracellular segment spans residues 299-315 (PSLTTSGTEPFCISSTT). Residues 316–340 (FDVFVWFGWANSSLNPIIYAFNADF) traverse the membrane as a helical segment. Residues 341 to 451 (RKAFSNLLGC…PITQNGQPKT (111 aa)) are Cytoplasmic-facing. Cysteine 350 carries S-palmitoyl cysteine lipidation.

The protein belongs to the G-protein coupled receptor 1 family. In terms of tissue distribution, brain.

The protein localises to the cell membrane. It is found in the cell projection. Its subcellular location is the cilium membrane. Its function is as follows. Dopamine receptor whose activity is mediated by G proteins which activate adenylyl cyclase. The polypeptide is D(1A) dopamine receptor (drd1) (Xenopus laevis (African clawed frog)).